The primary structure comprises 724 residues: Catalase-peroxidase (724 aa).

Positions Trp98–Tyr226 form a cross-link, tryptophyl-tyrosyl-methioninium (Trp-Tyr) (with M-252). His99 (proton acceptor) is an active-site residue. Positions Tyr226–Met252 form a cross-link, tryptophyl-tyrosyl-methioninium (Tyr-Met) (with W-98). His267 lines the heme b pocket.

This sequence belongs to the peroxidase family. Peroxidase/catalase subfamily. Homodimer or homotetramer. Heme b serves as cofactor. Formation of the three residue Trp-Tyr-Met cross-link is important for the catalase, but not the peroxidase activity of the enzyme.

The catalysed reaction is H2O2 + AH2 = A + 2 H2O. It catalyses the reaction 2 H2O2 = O2 + 2 H2O. In terms of biological role, bifunctional enzyme with both catalase and broad-spectrum peroxidase activity. The chain is Catalase-peroxidase from Cereibacter sphaeroides (strain ATCC 17025 / ATH 2.4.3) (Rhodobacter sphaeroides).